A 274-amino-acid polypeptide reads, in one-letter code: 3-methyl-2-oxobutanoate hydroxymethyltransferase (274 aa).

Positions 50 and 89 each coordinate Mg(2+). 3-methyl-2-oxobutanoate is bound by residues 50 to 51 (DS), Asp-89, and Lys-119. Residue Glu-121 participates in Mg(2+) binding. Catalysis depends on Glu-188, which acts as the Proton acceptor.

It belongs to the PanB family. As to quaternary structure, homodecamer; pentamer of dimers. It depends on Mg(2+) as a cofactor.

It localises to the cytoplasm. It catalyses the reaction 3-methyl-2-oxobutanoate + (6R)-5,10-methylene-5,6,7,8-tetrahydrofolate + H2O = 2-dehydropantoate + (6S)-5,6,7,8-tetrahydrofolate. Its pathway is cofactor biosynthesis; (R)-pantothenate biosynthesis; (R)-pantoate from 3-methyl-2-oxobutanoate: step 1/2. In terms of biological role, catalyzes the reversible reaction in which hydroxymethyl group from 5,10-methylenetetrahydrofolate is transferred onto alpha-ketoisovalerate to form ketopantoate. The chain is 3-methyl-2-oxobutanoate hydroxymethyltransferase from Methylorubrum extorquens (strain PA1) (Methylobacterium extorquens).